A 571-amino-acid chain; its full sequence is DM7 family protein CG15332 (571 aa).

Residues 440–472 (TRDDGINTADYQSQFPELEPEPEPEPEDEGEDV) form a disordered region. The segment covering 457 to 471 (LEPEPEPEPEDEGED) has biased composition (acidic residues).

It belongs to the DM7 family.

The chain is DM7 family protein CG15332 from Drosophila melanogaster (Fruit fly).